A 998-amino-acid chain; its full sequence is Ephrin type-B receptor 3 (998 aa).

Positions 1-33 are cleaved as a signal peptide; that stretch reads MARARPPPPPSPPPGLLPLLPPLLLLPLLLLPA. The Extracellular portion of the chain corresponds to 34-559; the sequence is GCRALEETLM…AQQLQEQLPL (526 aa). Residues 39–217 form the Eph LBD domain; that stretch reads EETLMDTKWV…FYKKCASTTA (179 aa). An intrachain disulfide couples Cys81 to Cys199. Fibronectin type-III domains are found at residues 339 to 451 and 452 to 545; these read VPSP…TNQA and APSE…TTSE. Asn351 and Asn445 each carry an N-linked (GlcNAc...) asparagine glycan. Residues 560–580 form a helical membrane-spanning segment; sequence IVGSATAGLVFVVAVVVIAIV. The Cytoplasmic segment spans residues 581–998; it reads CLRKQRHGSD…QMNQTLPVQV (418 aa). Tyr614 carries the post-translational modification Phosphotyrosine; by autocatalysis. In terms of domain architecture, Protein kinase spans 633–896; the sequence is VKIEEVIGAG…QIVNTLDKLI (264 aa). Residues 639 to 647 and Lys665 each bind ATP; that span reads IGAGEFGEV. Asp758 (proton acceptor) is an active-site residue. Residues 925–989 form the SAM domain; the sequence is TTFTTVGDWL…LSSIQDMRLQ (65 aa). Positions 996–998 match the PDZ-binding motif; that stretch reads VQV.

This sequence belongs to the protein kinase superfamily. Tyr protein kinase family. Ephrin receptor subfamily. Heterotetramer upon binding of the ligand. The heterotetramer is composed of an ephrin dimer and a receptor dimer. Oligomerization is probably required to induce biological responses. Post-translationally, phosphorylated. Autophosphorylates upon ligand-binding. Autophosphorylation on Tyr-614 is required for interaction with SH2 domain-containing proteins. Ubiquitinated by RNF186, mainly through 'Lys-48' and 'Lys-63'-linked polyubiquitin chains. Ubiquitous.

The protein localises to the cell membrane. The protein resides in the cell projection. It localises to the dendrite. It catalyses the reaction L-tyrosyl-[protein] + ATP = O-phospho-L-tyrosyl-[protein] + ADP + H(+). Its function is as follows. Receptor tyrosine kinase which binds promiscuously transmembrane ephrin-B family ligands residing on adjacent cells, leading to contact-dependent bidirectional signaling into neighboring cells. The signaling pathway downstream of the receptor is referred to as forward signaling while the signaling pathway downstream of the ephrin ligand is referred to as reverse signaling. Generally has an overlapping and redundant function with EPHB2. Like EPHB2, functions in axon guidance during development regulating for instance the neurons forming the corpus callosum and the anterior commissure, 2 major interhemispheric connections between the temporal lobes of the cerebral cortex. In addition to its role in axon guidance also plays an important redundant role with other ephrin-B receptors in development and maturation of dendritic spines and the formation of excitatory synapses. Controls other aspects of development through regulation of cell migration and positioning. This includes angiogenesis, palate development and thymic epithelium development for instance. Forward and reverse signaling through the EFNB2/EPHB3 complex also regulate migration and adhesion of cells that tubularize the urethra and septate the cloaca. Finally, plays an important role in intestinal epithelium differentiation segregating progenitor from differentiated cells in the crypt. This chain is Ephrin type-B receptor 3 (EPHB3), found in Homo sapiens (Human).